Consider the following 256-residue polypeptide: Triosephosphate isomerase (256 aa).

Asn-10–Lys-12 provides a ligand contact to substrate. His-96 functions as the Electrophile in the catalytic mechanism. Glu-168 functions as the Proton acceptor in the catalytic mechanism. Gly-174 and Ser-213 together coordinate substrate.

The protein belongs to the triosephosphate isomerase family. In terms of assembly, homodimer.

The protein localises to the cytoplasm. The enzyme catalyses D-glyceraldehyde 3-phosphate = dihydroxyacetone phosphate. It functions in the pathway carbohydrate biosynthesis; gluconeogenesis. It participates in carbohydrate degradation; glycolysis; D-glyceraldehyde 3-phosphate from glycerone phosphate: step 1/1. Functionally, involved in the gluconeogenesis. Catalyzes stereospecifically the conversion of dihydroxyacetone phosphate (DHAP) to D-glyceraldehyde-3-phosphate (G3P). This is Triosephosphate isomerase from Wigglesworthia glossinidia brevipalpis.